Here is a 484-residue protein sequence, read N- to C-terminus: Replication factor C large subunit (484 aa).

An ATP-binding site is contributed by 46–53 (GPPGSGKT). Residues 463 to 478 (NADTKEKEKKDPKKQA) show a composition bias toward basic and acidic residues. The interval 463-484 (NADTKEKEKKDPKKQATLDSFF) is disordered.

It belongs to the activator 1 small subunits family. RfcL subfamily. In terms of assembly, heteromultimer composed of small subunits (RfcS) and large subunits (RfcL).

Functionally, part of the RFC clamp loader complex which loads the PCNA sliding clamp onto DNA. The chain is Replication factor C large subunit from Methanococcus maripaludis (strain C6 / ATCC BAA-1332).